We begin with the raw amino-acid sequence, 520 residues long: Ribonuclease Y (520 aa).

Residues 5 to 25 traverse the membrane as a helical segment; the sequence is ITIISSLLFLIVGLVVGSLIF. Residues 76–127 form a disordered region; that stretch reads ELRGRRTETQKAENRLLQREENLDRKDTSLSKREATLERKEESISKRQQQIE. The region spanning 210 to 273 is the KH domain; sequence TVSVVTLPND…EIARIALEKL (64 aa). An HD domain is found at 336 to 429; sequence VLNHSLEVSK…VAAADALSAA (94 aa).

This sequence belongs to the RNase Y family.

Its subcellular location is the cell membrane. In terms of biological role, endoribonuclease that initiates mRNA decay. The polypeptide is Ribonuclease Y (Listeria monocytogenes serotype 1/2a (strain 10403S)).